A 335-amino-acid polypeptide reads, in one-letter code: Transcription factor E2F5 (335 aa).

A compositionally biased stretch (low complexity) spans Met-1 to Ala-18. The interval Met-1 to Arg-40 is disordered. The DNA-binding element occupies Gly-37–Gly-108. A leucine-zipper region spans residues Leu-66–Leu-88. The DEF box signature appears at Asp-71–Gly-108. Residues Ala-109 to Ile-205 form a dimerization region. The disordered stretch occupies residues Ser-226–Gly-285. Over residues Asp-238–Thr-256 the composition is skewed to low complexity. A transactivation region spans residues Thr-277 to Tyr-335. Residues Asp-312 to Asp-329 form an RBL2 association region.

Belongs to the E2F/DP family. In terms of assembly, component of the DRTF1/E2F transcription factor complex. Binds cooperatively with DP-1 to E2F sites. Interaction with retinoblastoma protein RB1 or proteins RBL1 and RBL2 inhibits the E2F transactivation domain. Component of the DREAM complex (also named LINC complex) at least composed of E2F4, E2F5, LIN9, LIN37, LIN52, LIN54, MYBL1, MYBL2, RBL1, RBL2, RBBP4, TFDP1 and TFDP2. The complex exists in quiescent cells where it represses cell cycle-dependent genes. It dissociates in S phase when LIN9, LIN37, LIN52 and LIN54 form a subcomplex that binds to MYBL2.

Its subcellular location is the nucleus. In terms of biological role, transcriptional activator that binds to E2F sites, these sites are present in the promoter of many genes whose products are involved in cell proliferation. May mediate growth factor-initiated signal transduction. It is likely involved in the early responses of resting cells to growth factor stimulation. Specifically required for multiciliate cell differentiation: together with MCIDAS and E2F5, binds and activate genes required for centriole biogenesis. In Mus musculus (Mouse), this protein is Transcription factor E2F5 (E2f5).